Reading from the N-terminus, the 401-residue chain is S-adenosylmethionine synthase (401 aa).

His-16 lines the ATP pocket. Residue Asp-18 participates in Mg(2+) binding. Glu-44 contributes to the K(+) binding site. L-methionine contacts are provided by Glu-57 and Gln-109. The interval Gln-109–Ala-119 is flexible loop. Residues Asp-174–Lys-176, Asp-251, Arg-257–Lys-258, Ala-274, and Lys-278 each bind ATP. Asp-251 contacts L-methionine. Lys-282 contacts L-methionine.

The protein belongs to the AdoMet synthase family. In terms of assembly, homotetramer; dimer of dimers. Mg(2+) is required as a cofactor. It depends on K(+) as a cofactor.

It is found in the cytoplasm. It carries out the reaction L-methionine + ATP + H2O = S-adenosyl-L-methionine + phosphate + diphosphate. It participates in amino-acid biosynthesis; S-adenosyl-L-methionine biosynthesis; S-adenosyl-L-methionine from L-methionine: step 1/1. Its function is as follows. Catalyzes the formation of S-adenosylmethionine (AdoMet) from methionine and ATP. The overall synthetic reaction is composed of two sequential steps, AdoMet formation and the subsequent tripolyphosphate hydrolysis which occurs prior to release of AdoMet from the enzyme. The chain is S-adenosylmethionine synthase from Novosphingobium aromaticivorans (strain ATCC 700278 / DSM 12444 / CCUG 56034 / CIP 105152 / NBRC 16084 / F199).